Consider the following 314-residue polypeptide: Ribosomal protein L11 methyltransferase (314 aa).

S-adenosyl-L-methionine-binding residues include Thr161, Gly182, Asp204, and Asn248.

This sequence belongs to the methyltransferase superfamily. PrmA family.

It localises to the cytoplasm. It carries out the reaction L-lysyl-[protein] + 3 S-adenosyl-L-methionine = N(6),N(6),N(6)-trimethyl-L-lysyl-[protein] + 3 S-adenosyl-L-homocysteine + 3 H(+). Functionally, methylates ribosomal protein L11. The chain is Ribosomal protein L11 methyltransferase from Listeria welshimeri serovar 6b (strain ATCC 35897 / DSM 20650 / CCUG 15529 / CIP 8149 / NCTC 11857 / SLCC 5334 / V8).